The sequence spans 146 residues: Envelope protein OPG155 (146 aa).

A helical; Signal-anchor for type III membrane protein membrane pass occupies residues 1-21 (MNSLSIFFIVVATAAVCLLFI). Over 22–146 (QGYSIYENYG…VECQFLKSVL (125 aa)) the chain is Intravirion.

This sequence belongs to the orthopoxvirus OPG155 protein family. As to quaternary structure, part of a stable entry-fusion complex (EFC) which is at least composed of proteins OPG143, OPG147, OPG155, OPG086, OPG094, OPG107, OPG104, and OPG099. Formation of the viral membrane is necessary for the assembly of the complex. Interacts directly with protein OPG107. Contains two intramolecular disulfide bonds. They are created by the viral disulfide bond formation pathway, a poxvirus-specific pathway that operates on the cytoplasmic side of the MV membranes.

The protein resides in the virion membrane. In terms of biological role, envelope protein required for virus entry into host cell and for cell-cell fusion (syncytium formation). In Variola virus (isolate Human/India/Ind3/1967) (VARV), this protein is Envelope protein OPG155 (OPG155).